Here is a 209-residue protein sequence, read N- to C-terminus: Small ribosomal subunit protein eS1 (209 aa).

This sequence belongs to the eukaryotic ribosomal protein eS1 family.

This Picrophilus torridus (strain ATCC 700027 / DSM 9790 / JCM 10055 / NBRC 100828 / KAW 2/3) protein is Small ribosomal subunit protein eS1.